A 562-amino-acid polypeptide reads, in one-letter code: Endoglucanase E1 (562 aa).

The signal sequence occupies residues 1–41; that stretch reads MPRALRRVPGSRVMLRVGVVVAVLALVAALANLAVPRPARA. Residues 42 to 400 form a catalytic region; it reads AGGGYWHTSG…IKSSIFDPVG (359 aa). Cys-75 and Cys-161 are joined by a disulfide. Glu-203 acts as the Proton donor in catalysis. Cys-209 and Cys-212 are disulfide-bonded. Glu-323 (nucleophile) is an active-site residue. The disordered stretch occupies residues 399–462; that stretch reads VGASASPSSQ…PTPSPTAASG (64 aa). 2 stretches are compositionally biased toward low complexity: residues 401-411 and 437-449; these read ASASPSSQPSP and PTPTLTPTATPTP. The CBM2 domain maps to 458–562; that stretch reads TAASGARCTA…AAPTVACAAS (105 aa).

It belongs to the glycosyl hydrolase 5 (cellulase A) family.

The enzyme catalyses Endohydrolysis of (1-&gt;4)-beta-D-glucosidic linkages in cellulose, lichenin and cereal beta-D-glucans.. Functionally, has a very high specific activity on carboxymethylcellulose. This is Endoglucanase E1 from Acidothermus cellulolyticus (strain ATCC 43068 / DSM 8971 / 11B).